A 475-amino-acid chain; its full sequence is Zinc finger protein 383 (475 aa).

A KRAB domain is found at 6-77 (VMFSDVSIDF…GRELTRGLCS (72 aa)). 11 C2H2-type zinc fingers span residues 170–192 (FECKKCGKAFSQNSQFIQHQRIH), 198–220 (YECKECGKFFSCGSHVTRHLKIH), 226–248 (FECKECGKAFSCSSYLSQHQRIH), 254–276 (YECKECGKAFSYCSNLIDHQRIH), 282–304 (YACKVCGKAFTKSSQLFQHVRIH), 310–332 (YECKECGKAFTQSSKLVQHQRIH), 338–360 (YECKECGKAFSSGSALTNHQRIH), 366–388 (YDCKECGKAFTQSSQLRQHQRIH), 394–416 (FECLECGKAFTQNSQLFQHQRIH), 422–444 (YECNECGKAFNKCSNLTRHLRIH), and 450–472 (YNCKECGKAFSSGSDLIRHQGIH).

This sequence belongs to the krueppel C2H2-type zinc-finger protein family.

Its subcellular location is the nucleus. It localises to the cytoplasm. May function as a transcriptional repressor, suppressing transcriptional activities mediated by MAPK signaling pathways. In Macaca fascicularis (Crab-eating macaque), this protein is Zinc finger protein 383 (ZNF383).